Consider the following 90-residue polypeptide: U7-theraphotoxin-Hhn1j (90 aa).

Positions 1–19 are cleaved as a signal peptide; it reads MKTAIFTVVLALAVFAVLS. Residues 20–50 constitute a propeptide that is removed on maturation; that stretch reads FGWEANEKALSEEFTELIHEKEAASETEARE. 3 cysteine pairs are disulfide-bonded: cysteine 51-cysteine 65, cysteine 58-cysteine 70, and cysteine 64-cysteine 81.

It belongs to the neurotoxin 10 (Hwtx-1) family. 13 (Hntx-13) subfamily. As to expression, expressed by the venom gland.

The protein resides in the secreted. Functionally, ion channel inhibitor. The chain is U7-theraphotoxin-Hhn1j from Cyriopagopus hainanus (Chinese bird spider).